Here is a 493-residue protein sequence, read N- to C-terminus: Probable cytosol aminopeptidase (493 aa).

Residues Lys257 and Asp262 each contribute to the Mn(2+) site. Residue Lys269 is part of the active site. Mn(2+) is bound by residues Asp281, Asp341, and Glu343. The active site involves Arg345.

The protein belongs to the peptidase M17 family. Requires Mn(2+) as cofactor.

The protein localises to the cytoplasm. The catalysed reaction is Release of an N-terminal amino acid, Xaa-|-Yaa-, in which Xaa is preferably Leu, but may be other amino acids including Pro although not Arg or Lys, and Yaa may be Pro. Amino acid amides and methyl esters are also readily hydrolyzed, but rates on arylamides are exceedingly low.. It catalyses the reaction Release of an N-terminal amino acid, preferentially leucine, but not glutamic or aspartic acids.. Presumably involved in the processing and regular turnover of intracellular proteins. Catalyzes the removal of unsubstituted N-terminal amino acids from various peptides. The sequence is that of Probable cytosol aminopeptidase from Synechococcus sp. (strain WH7803).